Reading from the N-terminus, the 356-residue chain is Probable scoulerine-9-O-methyltransferase OMT2B (356 aa).

Methionine 173 is an S-adenosyl-L-methionine binding site. Aspartate 176 provides a ligand contact to substrate. S-adenosyl-L-methionine contacts are provided by residues threonine 177, glycine 202, aspartate 225, 245 to 246 (DI), and lysine 259. 260 to 264 (YVLHN) provides a ligand contact to substrate. Histidine 263 acts as the Proton acceptor in catalysis.

This sequence belongs to the class I-like SAM-binding methyltransferase superfamily. Cation-independent O-methyltransferase family. COMT subfamily.

It catalyses the reaction (S)-scoulerine + S-adenosyl-L-methionine = (S)-tetrahydrocolumbamine + S-adenosyl-L-homocysteine + H(+). The protein operates within alkaloid biosynthesis. Its function is as follows. Methyltransferase involved in the biosynthesis of the benzylisoquinoline alkaloid noscapine. Catalyzes the conversion of (S)-scoulerine to (S)-tetrahydrocolumbamine. The heterodimers OMT2B-SOMT3 and OMT2B-6OMT do not possess 3-O-acetyl-4'-O-demethylpapaveroxine 4'-O-methyltransferase activity. This Papaver somniferum (Opium poppy) protein is Probable scoulerine-9-O-methyltransferase OMT2B.